Here is a 50-residue protein sequence, read N- to C-terminus: uncharacterized protein (50 aa).

The first 22 residues, 1–22 (MSKVAALGWGTLVYLGVGLLLA), serve as a signal peptide directing secretion.

This is an uncharacterized protein from Dictyostelium discoideum (Social amoeba).